The sequence spans 366 residues: Anhydro-N-acetylmuramic acid kinase (366 aa).

An ATP-binding site is contributed by 10 to 17 (GTSMDGID).

Belongs to the anhydro-N-acetylmuramic acid kinase family.

It carries out the reaction 1,6-anhydro-N-acetyl-beta-muramate + ATP + H2O = N-acetyl-D-muramate 6-phosphate + ADP + H(+). It functions in the pathway amino-sugar metabolism; 1,6-anhydro-N-acetylmuramate degradation. The protein operates within cell wall biogenesis; peptidoglycan recycling. In terms of biological role, catalyzes the specific phosphorylation of 1,6-anhydro-N-acetylmuramic acid (anhMurNAc) with the simultaneous cleavage of the 1,6-anhydro ring, generating MurNAc-6-P. Is required for the utilization of anhMurNAc either imported from the medium or derived from its own cell wall murein, and thus plays a role in cell wall recycling. This Legionella pneumophila (strain Paris) protein is Anhydro-N-acetylmuramic acid kinase.